The sequence spans 333 residues: Ornithine carbamoyltransferase (333 aa).

Residues 56–59, Gln-83, Arg-107, and 134–137 each bind carbamoyl phosphate; these read STRT and HPTQ. Residues Asn-167, Asp-231, and 235-236 contribute to the L-ornithine site; that span reads SM. Carbamoyl phosphate-binding positions include 273–274 and Arg-318; that span reads CL.

Belongs to the aspartate/ornithine carbamoyltransferase superfamily. OTCase family.

Its subcellular location is the cytoplasm. It catalyses the reaction carbamoyl phosphate + L-ornithine = L-citrulline + phosphate + H(+). It participates in amino-acid biosynthesis; L-arginine biosynthesis; L-arginine from L-ornithine and carbamoyl phosphate: step 1/3. Reversibly catalyzes the transfer of the carbamoyl group from carbamoyl phosphate (CP) to the N(epsilon) atom of ornithine (ORN) to produce L-citrulline. The chain is Ornithine carbamoyltransferase (argF) from Staphylococcus aureus (strain Mu50 / ATCC 700699).